The following is a 468-amino-acid chain: Intramembrane protease 2 (468 aa).

Over 1–22 the chain is Lumenal; that stretch reads MAEAATEIPPTASNVTVFTFEE. An N-linked (GlcNAc...) asparagine glycan is attached at N14. Residues 23–43 form a helical membrane-spanning segment; the sequence is QATSSLALYGMSILCIIIGSI. At 44 to 70 the chain is on the cytoplasmic side; sequence RSAQYIRTNIDKKRLIEGSITMREARK. A helical membrane pass occupies residues 71 to 91; sequence FPISASLVLFGLYLFFKPAAE. At 92–168 the chain is on the lumenal side; that stretch reads RFLWVARVFQ…TNLPTIQKAE (77 aa). N-linked (GlcNAc...) asparagine glycosylation is found at N114 and N123. The chain crosses the membrane as a helical span at residues 169-189; sequence CMQLLTFLICFEGVNAFASLL. Residues 190 to 247 lie on the Cytoplasmic side of the membrane; sequence KPFVTAFLKKMPLVPSFLRFNAPYLFSLKKGNKEMEEGDIEDAKKKETEYLFKIDFDR. A helical transmembrane segment spans residues 248–265; sequence YDIIALLMCSPILISHLL. Residues 266-267 lie on the Lumenal side of the membrane; that stretch reads KR. Residues 268 to 284 traverse the membrane as a helical segment; the sequence is HWITNNIIGVSFSILGI. Over 285-296 the chain is Cytoplasmic; that stretch reads ERLHLASFKAGS. A helical transmembrane segment spans residues 297–317; sequence LLLVGLFFYDIFWVFGTDVMT. The active site involves D306. Residues 318 to 343 are Lumenal-facing; sequence SVAKGIDAPILLQFPQDIYRNGIMEA. Residues 344–364 traverse the membrane as a helical segment; it reads SKHSMLGLGDIVIPGIFIALL. The active site involves D353. The Cytoplasmic segment spans residues 365-388; it reads RRFDYRVVQTTAESKAPQGSLKGR. Residues 389 to 409 traverse the membrane as a helical segment; that stretch reads YYFVVTVVAYMAGLFITMAVM. Residues 410–415 are Lumenal-facing; that stretch reads HHFKAA. Residues 416–436 form a helical membrane-spanning segment; the sequence is QPALLYLVPCCLFVPLLLAVI. The short motif at 417–419 is the PAL element; sequence PAL. Over 437 to 468 the chain is Cytoplasmic; sequence RGELSALWNYDESRHVDNEENRKKVDSGKKNN.

The protein belongs to the peptidase A22B family.

The protein localises to the membrane. The protein resides in the endoplasmic reticulum membrane. Its function is as follows. Acts as intramembrane protease. In larvae, required for the complete shedding of the cuticle during molting, possibly by regulating cholesterol uptake via lrp-1. Involved in embryonic and larval development. This chain is Intramembrane protease 2, found in Caenorhabditis elegans.